The chain runs to 305 residues: Ribonuclease BN (305 aa).

Residues His64, His66, Asp68, His69, His141, Asp212, and His270 each contribute to the Zn(2+) site. The Proton acceptor role is filled by Asp68.

Belongs to the RNase Z family. RNase BN subfamily. As to quaternary structure, homodimer. It depends on Zn(2+) as a cofactor.

In terms of biological role, zinc phosphodiesterase, which has both exoribonuclease and endoribonuclease activities. The polypeptide is Ribonuclease BN (Escherichia coli O6:K15:H31 (strain 536 / UPEC)).